We begin with the raw amino-acid sequence, 339 residues long: Ketol-acid reductoisomerase (NADP(+)) (339 aa).

Positions 1–182 constitute a KARI N-terminal Rossmann domain; it reads MKVYYDADCD…GGGRSGIIET (182 aa). NADP(+) contacts are provided by residues 24–27, arginine 48, serine 51, serine 53, and 83–86; these read YGSQ and DEHQ. Residue histidine 108 is part of the active site. Glycine 134 is a binding site for NADP(+). In terms of domain architecture, KARI C-terminal knotted spans 183–328; that stretch reads NFREECETDL…AKLRAMMPWI (146 aa). Residues aspartate 191, glutamate 195, glutamate 227, and glutamate 231 each coordinate Mg(2+). Residue serine 252 participates in substrate binding.

It belongs to the ketol-acid reductoisomerase family. Mg(2+) serves as cofactor.

It catalyses the reaction (2R)-2,3-dihydroxy-3-methylbutanoate + NADP(+) = (2S)-2-acetolactate + NADPH + H(+). It carries out the reaction (2R,3R)-2,3-dihydroxy-3-methylpentanoate + NADP(+) = (S)-2-ethyl-2-hydroxy-3-oxobutanoate + NADPH + H(+). Its pathway is amino-acid biosynthesis; L-isoleucine biosynthesis; L-isoleucine from 2-oxobutanoate: step 2/4. It functions in the pathway amino-acid biosynthesis; L-valine biosynthesis; L-valine from pyruvate: step 2/4. Involved in the biosynthesis of branched-chain amino acids (BCAA). Catalyzes an alkyl-migration followed by a ketol-acid reduction of (S)-2-acetolactate (S2AL) to yield (R)-2,3-dihydroxy-isovalerate. In the isomerase reaction, S2AL is rearranged via a Mg-dependent methyl migration to produce 3-hydroxy-3-methyl-2-ketobutyrate (HMKB). In the reductase reaction, this 2-ketoacid undergoes a metal-dependent reduction by NADPH to yield (R)-2,3-dihydroxy-isovalerate. The chain is Ketol-acid reductoisomerase (NADP(+)) from Novosphingobium aromaticivorans (strain ATCC 700278 / DSM 12444 / CCUG 56034 / CIP 105152 / NBRC 16084 / F199).